A 375-amino-acid polypeptide reads, in one-letter code: Growth/differentiation factor 8 (375 aa).

An N-terminal signal peptide occupies residues 1 to 23 (MQKLQLCVYIYLFMLIVAGPVDL). Positions 24–266 (NENSEQKENV…VTDTPKRSRR (243 aa)) are excised as a propeptide. N-linked (GlcNAc...) asparagine glycosylation is present at Asn-71. Intrachain disulfides connect Cys-272-Cys-282, Cys-281-Cys-340, Cys-309-Cys-372, and Cys-313-Cys-374.

The protein belongs to the TGF-beta family. In terms of assembly, homodimer; disulfide-linked. Interacts with WFIKKN2, leading to inhibit its activity. Interacts with FST3. Synthesized as large precursor molecule that undergoes proteolytic cleavage to generate an N-terminal propeptide and a disulfide linked C-terminal dimer, which is the biologically active molecule. The circulating form consists of a latent complex of the C-terminal dimer and other proteins, including its propeptide, which maintain the C-terminal dimer in a latent, inactive state. Ligand activation requires additional cleavage of the prodomain by a tolloid-like metalloproteinase.

The protein resides in the secreted. In terms of biological role, acts specifically as a negative regulator of skeletal muscle growth. The sequence is that of Growth/differentiation factor 8 (MSTN) from Homo sapiens (Human).